The sequence spans 523 residues: Calcium-dependent protein kinase 28 (523 aa).

The N-myristoyl glycine moiety is linked to residue G2. A lipid anchor (S-palmitoyl cysteine) is attached at C4. The tract at residues 15-43 is disordered; it reads SSRRSSQTKSKAAPTPIDTKASTKRRTGS. One can recognise a Protein kinase domain in the interval 62 to 322; sequence YTIGKLLGHG…AAQALSHAWV (261 aa). Residues 68 to 76 and K91 each bind ATP; that span reads LGHGQFGYT. D188 functions as the Proton acceptor in the catalytic mechanism. 2 positions are modified to phosphoserine: S228 and S318. The segment at 328–358 is autoinhibitory domain; it reads ATDIPVDISVLNNLRQFVRYSRLKQFALRAL. EF-hand domains lie at 365-400, 402-437, 444-479, and 482-509; these read AEISDLRDQFDAIDVDKNGVISLEEMRQALAKDLPW, LKDSRVAEILEAIDSNTDGLVDFTEFVAAALHVHQL, KWQLRSRAAFEKFDLDKDGYITPEELRMHTGLRGSI, and LLDEADIDRDGKISLHEFRRLLRTASIS. Ca(2+)-binding residues include D378, D380, N382, E389, D415, N417, D419, E426, D457, D459, D461, Y463, E468, D487, D489, D491, and K493. The residue at position 495 (S495) is a Phosphoserine. E498 provides a ligand contact to Ca(2+). Residue S515 is modified to Phosphoserine.

Belongs to the protein kinase superfamily. Ser/Thr protein kinase family. CDPK subfamily. Interacts with BIK1. As to expression, expressed in vascular and meristematic tissues throughout plant development.

The protein resides in the cell membrane. The catalysed reaction is L-seryl-[protein] + ATP = O-phospho-L-seryl-[protein] + ADP + H(+). The enzyme catalyses L-threonyl-[protein] + ATP = O-phospho-L-threonyl-[protein] + ADP + H(+). Its activity is regulated as follows. Activated by calcium. Autophosphorylation plays an important role in the regulation of the kinase activity. Functionally, may play a role in signal transduction pathways that involve calcium as a second messenger. Acts as a developmentally controlled regulator for coordinated stem elongation and vascular development. Acts as a key component which contributes to the developmental switch that establishes the transition from vegetative to reproductive growth. Involved in pathogen-associated molecular pattern (PAMP)-triggered immunity (PTI) signaling. Interacts with and phosphorylates the kinase BIK1, a central rate-limiting kinase in PTI signaling. Facilitates BIK1 turnover and negatively regulates BIK1-mediated immune responses triggered by several PAMPs. Its kinase activity is necessary and sufficient for its function in PTI signaling. The sequence is that of Calcium-dependent protein kinase 28 from Arabidopsis thaliana (Mouse-ear cress).